Consider the following 1588-residue polypeptide: MRKNSSHENQSSENIIEFPYVDFEELNVHSNIFSELEHAKPSTQQQQQQQNISNETTSTGPRICISRDEFKAVNLLTKEEINVRVTPKKEEFSRGLDFISDLYDQTARKSGAVRVIPPDNWKCPLTINTTTFKFLTRKNNPSSMSLVSNYPLDAISSQQKFHGNDKTLEKNSAKATINKSNSTAETSSTATVEPYDSNDLYRIFDRPDAVVLSYIFVLGKAVDLLQIKQWLQLSKQKNLLEFEFWSQAAQHYKLDVNSLRNAYNLYAETGVTTRTGNDGGSPINRPAKRVKRQNHIPKCKLCAQEGSSLVTCCICQSNYHYACVEAPFAPFSDIHYWTCNSCIPSSLKILWKEVDYHCISSFLQSSNELASSLKKQLPSFLAQTPLTLPSNTKTPPASARQSSRRTRSTSGKGFETKISINLDSDIKLLNTLSPLETFFWCCSFPSTASTSSPFSYYPESLPTPLLGRAVNTTAFPTSRQNAYYNDPWNLYFIHFSKLSPLRFTPPGILTSTISLGQPLTCQGWQRDSMSLFGMHYHHYGAQRIWYVIPEVDGPKYEKLLNDLSPSFIQEKPETLIKSKILLPISMLISNGIQVLTFVQNSNEFVITSPNTYYTVLDTGFSLSESVPFATKEWIQDMHAENSFNMYKNLHISAPFSLDHILLANATLDKTVHSAYWLMTCLKDRVDRELTLRNEFRKRHPLLTWIPTPLESSVMACAFCKTFAYLASIEEKNGTKTACLSHKDECFPNTDSDLTVLVRYDDNALLAAYSKVVERAHKADTWLENYKEALGSDNSRPSLKVLKTLLNEAETICCPLQEVSLVRNLVKTAQQWLDKFAIIFKKKSMVKKEKRKPKRGSATHSHLESPSEEVEDLNSSNINEADLLINLVEEAEQFTFDFPEMAVAFEKAESLKIFREKANAMKERSLSYEECLAIVEEGESLQLKTPELLYFKQYMEKTEWIDSFNQISQKTDSTMEELVELIERGEKIGLTSDNENMATALLLKEKSENWMKQVEGLLSQETLSTSKLFQLKSEANSICINRGLLEQLNEVLQKSENFHTQLVSLISRARDPDYYSRPTIEEAKTVLAESENLTNKPEEYTVAQKLLTQTYEWVRRGKRLFGKANAPLEIFNQHLEFVEQRNTNAMVDEGSDAPFHVGNEYYVIAGSDPSDFHYCFCRQPEAGMMIECELCHEWYHAKCMKMSKKKLRADEKFICPICDYRVEVPRHSHRPPLIELQKMVDDIPTLPFQPIEIELLKRVVKQAEEFKNKMQSEVCDPTQLSEKDVPLLQFYLRKLEGSEILFTEELNVFRQKLHEFMPVAPQPPPFIGESRSNRKPRPTKRQREIMEQVESGKLTSAEGAAAIAATQTRNQNNFISKPFNVHTLSTTLSPWAMKSLAQAAISPNPMPSAHDLLPTSNPAELFTNISPEIKELSVDSTSTLGGLNSSHLVSDQNASVICLCRQPFAISDGTVQCHNCLEWFHYECVGLSSDIVSTLSNYACPDCCSKEGKLYPWNTRPRSTPSVWLSQAYSPSVLQGTTENVAFLNKAFSASANLFDVLPVSNTPSHFSKMDYVLEDRKPDLFTETYLSM.

The interval 38–60 is disordered; sequence HAKPSTQQQQQQQNISNETTSTG. The span at 51 to 60 shows a compositional bias: polar residues; that stretch reads NISNETTSTG. In terms of domain architecture, JmjN spans 82 to 124; the sequence is NVRVTPKKEEFSRGLDFISDLYDQTARKSGAVRVIPPDNWKCP. The PHD-type 1 zinc finger occupies 298–345; it reads KCKLCAQEGSSLVTCCICQSNYHYACVEAPFAPFSDIHYWTCNSCIPS. A compositionally biased stretch (polar residues) spans 385 to 395; the sequence is PLTLPSNTKTP. A disordered region spans residues 385–412; that stretch reads PLTLPSNTKTPPASARQSSRRTRSTSGK. A JmjC domain is found at 475–645; that stretch reads FPTSRQNAYY…DMHAENSFNM (171 aa). The segment at 848–872 is disordered; it reads EKRKPKRGSATHSHLESPSEEVEDL. The PHD-type 2 zinc-finger motif lies at 1171-1220; the sequence is FHYCFCRQPEAGMMIECELCHEWYHAKCMKMSKKKLRADEKFICPICDYR. Residues 1319–1341 are disordered; it reads APQPPPFIGESRSNRKPRPTKRQ. The PHD-type 3 zinc finger occupies 1454 to 1505; the sequence is SVICLCRQPFAISDGTVQCHNCLEWFHYECVGLSSDIVSTLSNYACPDCCSK.

The protein resides in the nucleus. In terms of biological role, has a role in regulating chromatin structure via global deacetylation of histone H3. This function is associated with the activity of a histone deacetylase. In Schizosaccharomyces pombe (strain 972 / ATCC 24843) (Fission yeast), this protein is Multicopy suppressor of chk1 protein 1 (msc1).